Consider the following 538-residue polypeptide: Chaperonin GroEL (538 aa).

ATP contacts are provided by residues 29-32 (TLGP), 86-90 (DGTTT), glycine 413, 479-481 (DAL), and aspartate 495.

It belongs to the chaperonin (HSP60) family. As to quaternary structure, forms a cylinder of 14 subunits composed of two heptameric rings stacked back-to-back. Interacts with the co-chaperonin GroES.

Its subcellular location is the cytoplasm. It carries out the reaction ATP + H2O + a folded polypeptide = ADP + phosphate + an unfolded polypeptide.. Its function is as follows. Together with its co-chaperonin GroES, plays an essential role in assisting protein folding. The GroEL-GroES system forms a nano-cage that allows encapsulation of the non-native substrate proteins and provides a physical environment optimized to promote and accelerate protein folding. In Fervidobacterium nodosum (strain ATCC 35602 / DSM 5306 / Rt17-B1), this protein is Chaperonin GroEL.